Consider the following 514-residue polypeptide: 3-octaprenyl-4-hydroxybenzoate carboxy-lyase (514 aa).

Asparagine 177 provides a ligand contact to Mn(2+). Prenylated FMN is bound by residues 180-182, 194-196, and 199-200; these read IYR, RWL, and RG. Glutamate 243 is a binding site for Mn(2+). Aspartate 314 functions as the Proton donor in the catalytic mechanism.

The protein belongs to the UbiD family. In terms of assembly, homohexamer. The cofactor is prenylated FMN. Mn(2+) is required as a cofactor.

It localises to the cell membrane. It catalyses the reaction a 4-hydroxy-3-(all-trans-polyprenyl)benzoate + H(+) = a 2-(all-trans-polyprenyl)phenol + CO2. Its pathway is cofactor biosynthesis; ubiquinone biosynthesis. Its function is as follows. Catalyzes the decarboxylation of 3-octaprenyl-4-hydroxy benzoate to 2-octaprenylphenol, an intermediate step in ubiquinone biosynthesis. The polypeptide is 3-octaprenyl-4-hydroxybenzoate carboxy-lyase (Bordetella parapertussis (strain 12822 / ATCC BAA-587 / NCTC 13253)).